We begin with the raw amino-acid sequence, 835 residues long: MSMSVNEKGICYLPDLGSSFTEDAPRPPVPGEEGDLVSSDGRQYNHSFYSSKSDSLKNEASIATPRRPDLDLGYEPEGSASPTPPYLKWAESLHSLLDDQDGIHLFRTFLKQEECADMLDFWFACSGFRKQEANDGNEKMLKLAKAIYKKYILDNNGIVSRQIKPATKSFIKDCVTKLHIDPAMFDQAQTEIQTMMEENTYPLFLKSDIYLEYTRTGGESPKLFSDQSSVSGNGKVLPGYLPTVIEDVEWRCDQEEEQIAESDPTPSNRLTQKLPLETVPQRVANSKRYQDNREYRHASWREPVNPYYVNSGYALAPATSANDSEQQSMSSDADTLSLTDSSVDGVPPYRYRKPHRREIHESAKVNGRVPLPHIPRTNRIPKDIHVEPEKFAAELISRLEGVLREREAQEKLEERLKRVRLEEEGDDADISTGPSLANHRVPPAVHVQHYGGRYSEMSYNGLQLRDAHEENPESILDEHVQRVMKTPGCQSPGTGRHSPKSRSPDGLPAGKIPGLMMPLSGGQGKHQARQGPKGEAAHLHHHKHIHHTHYAAAGKPKEQAEAEAARMHGGFAWNTEQHHYGPKSRNYADGMSVGPNTMDPMGYSSKGSTLSKRPVRKGEDGRNFEMREPLPADDMERNQKILQWMMEGEKEAGRYKRGPYGSISGPKKAQGHEPARPSSVERLGAVHPWVTAQLRNNVQPSHPFIQDPTMPPNPAPNPLTQLEEARRRLEEERRKSGTLQAKQRHKNMKKQPCENITVAYYFRGEPIPYRTSVKGRIVTLGQFKELLTKKGSYKYYFKKVSYEFDCGVVFEEVREDDAILPIFEEKIIGKVEKVD.

Residues 16–60 form a disordered region; it reads LGSSFTEDAPRPPVPGEEGDLVSSDGRQYNHSFYSSKSDSLKNEA. Residues 40–53 show a composition bias toward polar residues; sequence DGRQYNHSFYSSKS. An RGS domain is found at 92–214; it reads SLHSLLDDQD…LKSDIYLEYT (123 aa). Residues 318–349 form a disordered region; the sequence is ATSANDSEQQSMSSDADTLSLTDSSVDGVPPY. Low complexity predominate over residues 328–344; that stretch reads SMSSDADTLSLTDSSVD. Residues 351-436 are interaction with GSK3B; that stretch reads YRKPHRREIH…DADISTGPSL (86 aa). The tract at residues 437–512 is interaction with beta-catenin; sequence ANHRVPPAVH…SPDGLPAGKI (76 aa). Disordered regions lie at residues 485–530 and 602–627; these read KTPG…QARQ and GYSS…FEMR. The segment covering 616 to 627 has biased composition (basic and acidic residues); sequence RKGEDGRNFEMR. One can recognise a DIX domain in the interval 753–835; sequence CENITVAYYF…KIIGKVEKVD (83 aa).

In terms of assembly, homodimer. Interacts with dixdc1. Interacts with hwa; leading to promote the tankyrase-mediated degradation of axin1. Post-translationally, ADP-ribosylated by tankyrase tnks and tnks2. Poly-ADP-ribosylated protein is recognized by rnf146, followed by ubiquitination at 'Lys-48' and subsequent activation of the Wnt signaling pathway. In terms of processing, ubiquitinated by rnf146 when poly-ADP-ribosylated, leading to its degradation and subsequent activation of the Wnt signaling pathway.

It localises to the cytoplasm. The protein localises to the nucleus. Its subcellular location is the membrane. The protein resides in the cell membrane. Its function is as follows. Component of the beta-catenin destruction complex required for regulating ctnnb1 levels through phosphorylation and ubiquitination, and modulating Wnt-signaling. Controls dorsoventral patterning via two opposing effects: down-regulates ctnnb1 to inhibit the Wnt signaling pathway and ventralize embryos, but also dorsalizes embryos by activating a Wnt-independent JNK signaling pathway. This Danio rerio (Zebrafish) protein is Axin-1 (axin1).